A 394-amino-acid polypeptide reads, in one-letter code: Elongation factor Tu 2 (394 aa).

One can recognise a tr-type G domain in the interval 10–204 (KPHVNVGTIG…ALDNYIPEPE (195 aa)). The interval 19-26 (GHVDHGKT) is G1. A GTP-binding site is contributed by 19–26 (GHVDHGKT). Threonine 26 serves as a coordination point for Mg(2+). A G2 region spans residues 60–64 (GITIS). The tract at residues 81–84 (DCPG) is G3. GTP is bound by residues 81–85 (DCPGH) and 136–139 (NKCD). The G4 stretch occupies residues 136-139 (NKCD). Positions 174 to 176 (SAL) are G5.

This sequence belongs to the TRAFAC class translation factor GTPase superfamily. Classic translation factor GTPase family. EF-Tu/EF-1A subfamily. In terms of assembly, monomer.

Its subcellular location is the cytoplasm. The enzyme catalyses GTP + H2O = GDP + phosphate + H(+). Its function is as follows. GTP hydrolase that promotes the GTP-dependent binding of aminoacyl-tRNA to the A-site of ribosomes during protein biosynthesis. The protein is Elongation factor Tu 2 of Photobacterium profundum (strain SS9).